We begin with the raw amino-acid sequence, 218 residues long: Small ribosomal subunit protein uS3 (218 aa).

The KH type-2 domain occupies 38 to 106 (IREFINQRLS…RVHINILEIK (69 aa)).

It belongs to the universal ribosomal protein uS3 family. In terms of assembly, part of the 30S ribosomal subunit. Forms a tight complex with proteins S10 and S14.

In terms of biological role, binds the lower part of the 30S subunit head. Binds mRNA in the 70S ribosome, positioning it for translation. In Bacillus licheniformis (strain ATCC 14580 / DSM 13 / JCM 2505 / CCUG 7422 / NBRC 12200 / NCIMB 9375 / NCTC 10341 / NRRL NRS-1264 / Gibson 46), this protein is Small ribosomal subunit protein uS3.